Here is a 397-residue protein sequence, read N- to C-terminus: Tryptophan synthase beta chain (397 aa).

Lys-91 is subject to N6-(pyridoxal phosphate)lysine.

This sequence belongs to the TrpB family. In terms of assembly, tetramer of two alpha and two beta chains. It depends on pyridoxal 5'-phosphate as a cofactor.

The catalysed reaction is (1S,2R)-1-C-(indol-3-yl)glycerol 3-phosphate + L-serine = D-glyceraldehyde 3-phosphate + L-tryptophan + H2O. It functions in the pathway amino-acid biosynthesis; L-tryptophan biosynthesis; L-tryptophan from chorismate: step 5/5. Functionally, the beta subunit is responsible for the synthesis of L-tryptophan from indole and L-serine. This is Tryptophan synthase beta chain from Bacillus cereus (strain ATCC 14579 / DSM 31 / CCUG 7414 / JCM 2152 / NBRC 15305 / NCIMB 9373 / NCTC 2599 / NRRL B-3711).